The following is a 1070-amino-acid chain: MPKRDDIKTILVIGSGPIVIGQAAEFDYAGTQACLSLKEEGYRVVLVNSNPATIMTDAEMADKVYIEPITLDFVSRIIRKERPDAILPTLGGQTGLNMAMELSAAGILDECNVEVLGTDLTAIKKAEDREAFRDLMNELGEPVPESDIIHNLDEAYTFVERIGYPVIVRPAYTLGGSGGGICHNEQELIETVTSGLKLSPVTQCLLEKSIAGFKEVEYEVMRDANNNAMVVCNMENIDPVGIHTGDSIVVAPSQTLSDREYQLLRDVSLKIIRALEIEGGCNVQLALDPDSYNYYVIEVNPRVSRSSALASKATGYPIAKLAAKIAVGLTLDEVRNPVTGTTFAHFEPTLDYVVAKIPRFAFDKFEQADRRLGTQMKATGEVMAIGRSWEEALLKAVRSLEIGADHLLLEEAENADEATLERKICFPEDDRLFFLAAALRRGQTIEQLHAKTKIDLFFLYKLSKTIELENRIKENPQNQEILAEAKRAGFSDAFLATCWNVDEQAIYDLRKAQNLFPVYKMVDTCAAEFESTTPYFYSTYEEENESTRSAKESVIVLGSGPIRIGQGVEFDYATVHSVWAIQQAGYEAIIINNNPETVSTDFSISDKLYFEPLTLEDVMHVIEIEQPLGVVVQFGGQTAINLADGLAKRGVKILGTSLEDTDRAENRDAFEKALEILQIPQPAGKTATSVEEAINVATDIGYPVLVRPSYVLGGRAMEIVESEEALKHYMTNAVKVNPKHPVLVDRYVSGQEVEVDAISDGENVLIPGIMEHIERAGVHSGDSIAVYPAQRLSSQVKNTIVDYTTRLATGLNIIGMLNIQYVVDGEEVFVIEVNPRSSRTAPFLSKITEIPMANVATRVILGENLIDLGYTPGLAPEKQEIFVKVPVFSFAKLRSVDTSLGPEMKSTGEVMGKDVTLEKALYKGFVASGTTMHDYGTVLLTVADRDKEEAVELAKRFNRIGFTIMATKGTASTLEEANIPVSQVKKIGENQETLIDYIRNGQVTLVVNTLTTGKRPERDGFQIRRESVENGIPVCTSLDTAEAILRVLESRSFELESMNASEVKQPKARV.

Positions 1–401 (MPKRDDIKTI…ALLKAVRSLE (401 aa)) are carboxyphosphate synthetic domain. Residues R129, R169, G175, G176, K208, I210, E215, G241, I242, H243, Q284, and E298 each coordinate ATP. Residues 133–327 (RDLMNELGEP…IAKLAAKIAV (195 aa)) form the ATP-grasp 1 domain. Residues Q284, E298, and N300 each contribute to the Mg(2+) site. Positions 284, 298, and 300 each coordinate Mn(2+). The oligomerization domain stretch occupies residues 402–546 (IGADHLLLEE…YSTYEEENES (145 aa)). The interval 547 to 929 (TRSAKESVIV…ALYKGFVASG (383 aa)) is carbamoyl phosphate synthetic domain. Positions 671–861 (EKALEILQIP…MANVATRVIL (191 aa)) constitute an ATP-grasp 2 domain. ATP is bound by residues R707, R746, V748, E752, G777, V778, H779, S780, Q820, and E832. Mg(2+)-binding residues include Q820, E832, and N834. 3 residues coordinate Mn(2+): Q820, E832, and N834. An MGS-like domain is found at 930-1070 (TTMHDYGTVL…SEVKQPKARV (141 aa)). The allosteric domain stretch occupies residues 930–1070 (TTMHDYGTVL…SEVKQPKARV (141 aa)).

Belongs to the CarB family. In terms of assembly, composed of two chains; the small (or glutamine) chain promotes the hydrolysis of glutamine to ammonia, which is used by the large (or ammonia) chain to synthesize carbamoyl phosphate. Tetramer of heterodimers (alpha,beta)4. Mg(2+) is required as a cofactor. Mn(2+) serves as cofactor.

It carries out the reaction hydrogencarbonate + L-glutamine + 2 ATP + H2O = carbamoyl phosphate + L-glutamate + 2 ADP + phosphate + 2 H(+). The enzyme catalyses hydrogencarbonate + NH4(+) + 2 ATP = carbamoyl phosphate + 2 ADP + phosphate + 2 H(+). Its pathway is amino-acid biosynthesis; L-arginine biosynthesis; carbamoyl phosphate from bicarbonate: step 1/1. It functions in the pathway pyrimidine metabolism; UMP biosynthesis via de novo pathway; (S)-dihydroorotate from bicarbonate: step 1/3. Its function is as follows. Large subunit of the glutamine-dependent carbamoyl phosphate synthetase (CPSase). CPSase catalyzes the formation of carbamoyl phosphate from the ammonia moiety of glutamine, carbonate, and phosphate donated by ATP, constituting the first step of 2 biosynthetic pathways, one leading to arginine and/or urea and the other to pyrimidine nucleotides. The large subunit (synthetase) binds the substrates ammonia (free or transferred from glutamine from the small subunit), hydrogencarbonate and ATP and carries out an ATP-coupled ligase reaction, activating hydrogencarbonate by forming carboxy phosphate which reacts with ammonia to form carbamoyl phosphate. This is Carbamoyl phosphate synthase large chain from Listeria monocytogenes serotype 4b (strain F2365).